We begin with the raw amino-acid sequence, 221 residues long: uncharacterized protein (221 aa).

Residues 1-189 enclose the Peptidase S8 domain; it reads MDSGKDTNGY…NVVYCSEKAV (189 aa).

The protein belongs to the peptidase S8 family.

This is an uncharacterized protein from Aquifex aeolicus (strain VF5).